We begin with the raw amino-acid sequence, 144 residues long: uncharacterized protein (144 aa).

N-linked (GlcNAc...) asparagine glycosylation is found at Asn-14 and Asn-15. A helical transmembrane segment spans residues 90-110 (FSWFIFGLFIACLLLCITLVL). Positions 120 to 144 (NKATEVVPSSNIDDEEKQLSLSDMI) are disordered.

Its subcellular location is the membrane. This is an uncharacterized protein from Saccharomyces cerevisiae (strain ATCC 204508 / S288c) (Baker's yeast).